A 501-amino-acid polypeptide reads, in one-letter code: Lysine--tRNA ligase (501 aa).

Residues Glu-411 and Glu-418 each contribute to the Mg(2+) site.

The protein belongs to the class-II aminoacyl-tRNA synthetase family. As to quaternary structure, homodimer. Mg(2+) is required as a cofactor.

The protein localises to the cytoplasm. It catalyses the reaction tRNA(Lys) + L-lysine + ATP = L-lysyl-tRNA(Lys) + AMP + diphosphate. In Pseudomonas aeruginosa (strain UCBPP-PA14), this protein is Lysine--tRNA ligase.